The primary structure comprises 341 residues: DER1-like family member protein 1 (341 aa).

The Cytoplasmic segment spans residues 1 to 41; the sequence is MAGPRNVRTLHGNGGRNNDVMGPKEFWLNIPPITRTLFTLA. A helical membrane pass occupies residues 42–62; the sequence is IVMTIVGRLNLINPWYFIYVW. Residues 63–122 lie on the Lumenal side of the membrane; that stretch reads NLTFKKVQIWRLLTSCVMLSSRAMPALMELYSIYDRSSQLERGHFGPGLSNRRGPMVTVD. Residues 123–143 form a helical membrane-spanning segment; sequence YAYYLCFCILAITTATTIIYG. At 144–170 the chain is on the cytoplasmic side; the sequence is SYYPVVLTSGFISCITYTWSIDNANVQ. Residues 171–191 form a helical membrane-spanning segment; the sequence is IMFYGLIPVWGKYFPLIQLFI. Residue serine 192 is a topological domain, lumenal. A helical transmembrane segment spans residues 193-213; sequence FVFNEGDFVISLIGFTTGYLY. The Cytoplasmic segment spans residues 214–341; the sequence is TCLDTHTLGP…GQTNSPSDSQ (128 aa). Polar residues-rich tracts occupy residues 276 to 286 and 296 to 341; these read SSQRETRTFSG and ATLS…SDSQ. The interval 276-341 is disordered; sequence SSQRETRTFS…GQTNSPSDSQ (66 aa).

Belongs to the derlin family.

It is found in the endoplasmic reticulum membrane. In terms of biological role, may be involved in the degradation process of some misfolded endoplasmic reticulum (ER) luminal proteins. Its precise role is however unclear and its inability to complement der1 mutations, suggests either that it is not involved in degradation process of misfolded proteins, or that it participates in the destruction of specific misfolded ER luminal proteins. This chain is DER1-like family member protein 1 (DFM1), found in Saccharomyces cerevisiae (strain ATCC 204508 / S288c) (Baker's yeast).